Here is a 763-residue protein sequence, read N- to C-terminus: MSELLSFALFLASVLIYAWKAGRNTWWFAATLTVLGLFVVLNITLFASDYFTGDGINDAVLYTLTNSLTGAGVSKYILPGIGIVLGLTAVFGALGWILRHRRHHPHHFGYSLLALLLALGSVDASPAFRQITELVKSQSRDGDPDFAAYYKEPSKTIPDPKLNLVYIYGESLERTYFDNEAFPDLTPELGALKNEGLDFSHTQQLPGTDYTIAGMVASQCGIPLFAPFEGNASASVSSFFPQNICLGDILKNSGYQNYFVQGANLRFAGKDVFLKSHGFDHLYGSEELKSVVADPHYRNDWGFYDDTVLDEAWKKFEELSRSGQRFSLFTLTVDTHHPDGFISRTCNRKKYDFDGKPNQSFSAVSCSQENIAAFINKIKASPWFKDTVIVVSSDHLAMNNTAWKYLNKQDRNNLFFVIRGDKPQQETLAVKRNTMDNGATVLDILGGDNYLGLGRSSLSGQSMSEIFLNIKEKTLAWKPDIIRLWKFPKEMKEFTIDQQKNMIAFSGSHFRLPLLLRVSDKRVEPLPESEYSAPLRFQLADFAPRDNFVWVDRCYKMAQLWAPELALSTDWCVSQGQLGGQQIVQHVDKTTWQGKTAFKDTVIDMARYKGNVDTLKIVDNDIRYKADSFIFNVAGAPEEVKQFSGISRPESWGRWSNAQLGDEVKIEYKHPLPKKFDLVITAKAYGNNASRPIPVRVGNEEQTLVLGNEVTTTTLHFDNPTDADTLVIVPPEPVSTNEGNILGHSPRKLGIGMVEIKVVEREG.

The next 4 membrane-spanning stretches (helical) occupy residues 1-21 (MSEL…AWKA), 26-46 (WWFA…ITLF), 77-97 (ILPG…LGWI), and 108-128 (FGYS…SPAF).

The protein belongs to the OpgB family.

Its subcellular location is the cell inner membrane. The enzyme catalyses a phosphatidylglycerol + a membrane-derived-oligosaccharide D-glucose = a 1,2-diacyl-sn-glycerol + a membrane-derived-oligosaccharide 6-(glycerophospho)-D-glucose.. Its pathway is glycan metabolism; osmoregulated periplasmic glucan (OPG) biosynthesis. In terms of biological role, transfers a phosphoglycerol residue from phosphatidylglycerol to the membrane-bound nascent glucan backbones. The chain is Phosphoglycerol transferase I from Shigella boydii serotype 18 (strain CDC 3083-94 / BS512).